The sequence spans 1621 residues: ABC transporter A family member 2 (1621 aa).

The next 7 helical transmembrane spans lie at 30-50 (ILFP…VMAF), 234-254 (SVFI…DLVI), 276-296 (ISWM…ISII), 309-329 (GVVI…AFIL), 338-358 (FCGL…IFVA), 365-385 (GAKL…IFAM), and 405-425 (NQVI…VWYL). The 234-residue stretch at 484–717 (ISIRNLRKEY…FGCGYLLTCS (234 aa)) folds into the ABC transporter 1 domain. 520-527 (GPNGSGKS) is an ATP binding site. 7 helical membrane passes run 856–876 (FFLT…MYKA), 1033–1053 (IVYF…SFAG), 1083–1103 (VWDY…LAGI), 1111–1131 (FGLM…LSYL), 1142–1162 (ATGA…IISL), 1183–1203 (VDIV…LFLV), and 1227–1247 (GSPM…IMIL). Positions 1293-1528 (LQFRNLHKLF…FGAGYTFDVK (236 aa)) constitute an ABC transporter 2 domain. 1331–1338 (GLNGAGKT) serves as a coordination point for ATP.

This sequence belongs to the ABC transporter superfamily. ABCA family.

Its subcellular location is the membrane. This is ABC transporter A family member 2 (abcA2) from Dictyostelium discoideum (Social amoeba).